The sequence spans 231 residues: Pathogenesis-related thaumatin-like protein 3.7 (231 aa).

An N-terminal signal peptide occupies residues 1–27; that stretch reads MATVSDLALLLVAGLVAISLHMQEAGA. Cystine bridges form between cysteine 36–cysteine 230, cysteine 77–cysteine 87, cysteine 92–cysteine 98, cysteine 143–cysteine 218, cysteine 148–cysteine 201, cysteine 156–cysteine 166, cysteine 170–cysteine 179, and cysteine 180–cysteine 188.

The protein belongs to the thaumatin family.

May be involved in disease resistance. In Cryptomeria japonica (Japanese cedar), this protein is Pathogenesis-related thaumatin-like protein 3.7.